The primary structure comprises 259 residues: 4-hydroxy-tetrahydrodipicolinate reductase (259 aa).

Residues G9–M14 and E35 each bind NAD(+). Residue R36 participates in NADP(+) binding. NAD(+)-binding positions include G92–T94 and A116–M119. Catalysis depends on H149, which acts as the Proton donor/acceptor. Position 150 (H150) interacts with (S)-2,3,4,5-tetrahydrodipicolinate. Catalysis depends on K153, which acts as the Proton donor. Residue G159–T160 coordinates (S)-2,3,4,5-tetrahydrodipicolinate.

It belongs to the DapB family.

The protein localises to the cytoplasm. It catalyses the reaction (S)-2,3,4,5-tetrahydrodipicolinate + NAD(+) + H2O = (2S,4S)-4-hydroxy-2,3,4,5-tetrahydrodipicolinate + NADH + H(+). The enzyme catalyses (S)-2,3,4,5-tetrahydrodipicolinate + NADP(+) + H2O = (2S,4S)-4-hydroxy-2,3,4,5-tetrahydrodipicolinate + NADPH + H(+). It functions in the pathway amino-acid biosynthesis; L-lysine biosynthesis via DAP pathway; (S)-tetrahydrodipicolinate from L-aspartate: step 4/4. Its function is as follows. Catalyzes the conversion of 4-hydroxy-tetrahydrodipicolinate (HTPA) to tetrahydrodipicolinate. The chain is 4-hydroxy-tetrahydrodipicolinate reductase from Nitratidesulfovibrio vulgaris (strain DP4) (Desulfovibrio vulgaris).